Consider the following 1235-residue polypeptide: Bromodomain-containing protein 8 (1235 aa).

The residue at position 85 (Lys-85) is an N6-acetyllysine. Residues 97-171 (VRKLTAERVE…ATDAAYQARQ (75 aa)) adopt a coiled-coil conformation. Position 124 is a phosphothreonine (Arg-124). Phosphoserine occurs at positions 128 and 144. The tract at residues 186–205 (RSPIDSASPGGDYPLGDLTP) is disordered. Ala-264 carries the phosphothreonine modification. A phosphoserine mark is found at Ser-268, Ser-284, Ser-383, and Ser-387. Lys-469 is covalently cross-linked (Glycyl lysine isopeptide (Lys-Gly) (interchain with G-Cter in SUMO2)). At Lys-481 the chain carries N6-acetyllysine; alternate. Residue Lys-481 forms a Glycyl lysine isopeptide (Lys-Gly) (interchain with G-Cter in SUMO1); alternate linkage. Residue Lys-481 forms a Glycyl lysine isopeptide (Lys-Gly) (interchain with G-Cter in SUMO2); alternate linkage. Glycyl lysine isopeptide (Lys-Gly) (interchain with G-Cter in SUMO2) cross-links involve residues Lys-509 and Lys-575. A disordered region spans residues 551–597 (TAAGEIVEADVAIGKGDETPLTNVKTEASPESMLSPSHGSNPIEDPL). At Ser-579 the chain carries Phosphoserine. Lys-612 participates in a covalent cross-link: Glycyl lysine isopeptide (Lys-Gly) (interchain with G-Cter in SUMO2). Phosphoserine occurs at positions 621, 637, and 641. A disordered region spans residues 621–672 (SQIKDAPGEDEEEDGVSEAASLEEPKEEDQGEGYLSEMDNEPPVSESDDGFS). The 106-residue stretch at 706–811 (IQAQKIWKKA…RDVLEQIQQF (106 aa)) folds into the Bromo 1 domain. 3 disordered regions span residues 827–848 (AKSL…DSVP), 903–940 (ETED…AARK), and 966–999 (ESSE…ETEE). Over residues 831–846 (RGRDSTRKQDASEKDS) the composition is skewed to basic and acidic residues. Over residues 905 to 915 (EDPEAEELEES) the composition is skewed to acidic residues. A Phosphoserine modification is found at Leu-924. Over residues 979 to 999 (QEGREIKASEGERELCRETEE) the composition is skewed to basic and acidic residues. The Bromo 2 domain occupies 1099-1207 (DDPVQDHLLF…QEVLEQIQVL (109 aa)).

In terms of assembly, component of the NuA4 histone acetyltransferase complex which contains the catalytic subunit KAT5/TIP60 and the subunits EP400, TRRAP/PAF400, BRD8/SMAP, EPC1, DMAP1/DNMAP1, RUVBL1/TIP49, RUVBL2, ING3, actin, ACTL6A/BAF53A, MORF4L1/MRG15, MORF4L2/MRGX, MRGBP, YEATS4/GAS41, VPS72/YL1 and MEAF6. The NuA4 complex interacts with MYC and the adenovirus E1A protein. Component of a NuA4-related complex which contains EP400, TRRAP/PAF400, SRCAP, BRD8/SMAP, EPC1, DMAP1/DNMAP1, RUVBL1/TIP49, RUVBL2, actin, ACTL6A/BAF53A, VPS72 and YEATS4/GAS41. BRD8 isoform 2 interacts with RXRA/NR2B1 and THRB/ERBA2. Component of a SWR1-like complex. In terms of tissue distribution, expressed in adipose tissue, brain, heart, kidney, liver, lung, pancreas, placenta and skeletal muscle.

Its subcellular location is the nucleus. In terms of biological role, may act as a coactivator during transcriptional activation by hormone-activated nuclear receptors (NR). Isoform 2 stimulates transcriptional activation by AR/DHTR, ESR1/NR3A1, RXRA/NR2B1 and THRB/ERBA2. At least isoform 1 and isoform 2 are components of the NuA4 histone acetyltransferase (HAT) complex which is involved in transcriptional activation of select genes principally by acetylation of nucleosomal histones H4 and H2A. This modification may both alter nucleosome - DNA interactions and promote interaction of the modified histones with other proteins which positively regulate transcription. This complex may be required for the activation of transcriptional programs associated with oncogene and proto-oncogene mediated growth induction, tumor suppressor mediated growth arrest and replicative senescence, apoptosis, and DNA repair. NuA4 may also play a direct role in DNA repair when recruited to sites of DNA damage. Component of a SWR1-like complex that specifically mediates the removal of histone H2A.Z/H2AZ1 from the nucleosome. This Homo sapiens (Human) protein is Bromodomain-containing protein 8 (BRD8).